The chain runs to 105 residues: Malonate decarboxylase acyl carrier protein (105 aa).

O-(phosphoribosyl dephospho-coenzyme A)serine is present on Ser28.

This sequence belongs to the MdcC family. In terms of processing, covalently binds the prosthetic group of malonate decarboxylase.

Its subcellular location is the cytoplasm. Its function is as follows. Subunit of malonate decarboxylase, it is an acyl carrier protein to which acetyl and malonyl thioester residues are bound via a 2'-(5''-phosphoribosyl)-3'-dephospho-CoA prosthetic group and turn over during the catalytic mechanism. This Bradyrhizobium diazoefficiens (strain JCM 10833 / BCRC 13528 / IAM 13628 / NBRC 14792 / USDA 110) protein is Malonate decarboxylase acyl carrier protein.